The following is a 332-amino-acid chain: Ketol-acid reductoisomerase (NADP(+)) (332 aa).

The 182-residue stretch at 1 to 182 (MAVIYYDKDC…GSNRAGILET (182 aa)) folds into the KARI N-terminal Rossmann domain. NADP(+) is bound by residues 25–28 (YGAQ) and 83–86 (DTSQ). His108 is an active-site residue. Gly134 provides a ligand contact to NADP(+). Positions 183 to 328 (TFAEETETDL…AELRSMMSWL (146 aa)) constitute a KARI C-terminal knotted domain. Mg(2+) is bound by residues Asp191, Glu195, Glu227, and Glu231. Ser252 contacts substrate.

The protein belongs to the ketol-acid reductoisomerase family. The cofactor is Mg(2+).

It carries out the reaction (2R)-2,3-dihydroxy-3-methylbutanoate + NADP(+) = (2S)-2-acetolactate + NADPH + H(+). It catalyses the reaction (2R,3R)-2,3-dihydroxy-3-methylpentanoate + NADP(+) = (S)-2-ethyl-2-hydroxy-3-oxobutanoate + NADPH + H(+). Its pathway is amino-acid biosynthesis; L-isoleucine biosynthesis; L-isoleucine from 2-oxobutanoate: step 2/4. It functions in the pathway amino-acid biosynthesis; L-valine biosynthesis; L-valine from pyruvate: step 2/4. Functionally, involved in the biosynthesis of branched-chain amino acids (BCAA). Catalyzes an alkyl-migration followed by a ketol-acid reduction of (S)-2-acetolactate (S2AL) to yield (R)-2,3-dihydroxy-isovalerate. In the isomerase reaction, S2AL is rearranged via a Mg-dependent methyl migration to produce 3-hydroxy-3-methyl-2-ketobutyrate (HMKB). In the reductase reaction, this 2-ketoacid undergoes a metal-dependent reduction by NADPH to yield (R)-2,3-dihydroxy-isovalerate. This is Ketol-acid reductoisomerase (NADP(+)) from Dehalococcoides mccartyi (strain CBDB1).